Here is a 129-residue protein sequence, read N- to C-terminus: Small ribosomal subunit protein uS11 (129 aa).

The protein belongs to the universal ribosomal protein uS11 family. Part of the 30S ribosomal subunit. Interacts with proteins S7 and S18. Binds to IF-3.

Located on the platform of the 30S subunit, it bridges several disparate RNA helices of the 16S rRNA. Forms part of the Shine-Dalgarno cleft in the 70S ribosome. The protein is Small ribosomal subunit protein uS11 of Allorhizobium ampelinum (strain ATCC BAA-846 / DSM 112012 / S4) (Agrobacterium vitis (strain S4)).